The chain runs to 556 residues: Carotenoid-cleaving dioxygenase, mitochondrial (556 aa).

Residues H203, H263, H334, and H550 each contribute to the Fe cation site.

Belongs to the carotenoid oxygenase family. Fe(2+) is required as a cofactor.

The protein localises to the mitochondrion. The enzyme catalyses all-trans-beta-carotene + O2 = beta-ionone + all-trans-10'-apo-beta-carotenal. It catalyses the reaction 5-cis-lycopene + O2 = 5-cis-10'-apo-lycopenal + (3E,5E)-6,10-dimethylundeca-3,5,9-trien-2-one. It carries out the reaction 13-cis-lycopene + O2 = 13-cis-10'-apo-lycopenal + (3E,5E)-6,10-dimethylundeca-3,5,9-trien-2-one. The catalysed reaction is lutein + O2 = (3R,6R)-hydroxy-alpha-ionone + (3R)-3-hydroxy-10'-apo-beta-carotenal. The enzyme catalyses lutein + O2 = (3R,6R)-3-hydroxy-10'-apo-alpha-carotenal + (3R)-hydroxy-beta-ionone. It catalyses the reaction all-trans-zeaxanthin + 2 O2 = 4,9-dimethyldodeca-2,4,6,8,10-pentaenedial + 2 (3R)-hydroxy-beta-ionone. It carries out the reaction all-trans-zeaxanthin + O2 = (3R)-3-hydroxy-10'-apo-beta-carotenal + (3R)-hydroxy-beta-ionone. The catalysed reaction is beta-cryptoxanthin + O2 = all-trans-10'-apo-beta-carotenal + (3R)-hydroxy-beta-ionone. The enzyme catalyses all-trans-10'-apo-beta-carotenal + O2 = beta-ionone + 4,9-dimethyldodeca-2,4,6,8,10-pentaenedial. It catalyses the reaction (3R)-3-hydroxy-10'-apo-beta-carotenal + O2 = 4,9-dimethyldodeca-2,4,6,8,10-pentaenedial + (3R)-hydroxy-beta-ionone. It carries out the reaction (3R,6R)-3-hydroxy-10'-apo-alpha-carotenal + O2 = (3R,6R)-hydroxy-alpha-ionone + 4,9-dimethyldodeca-2,4,6,8,10-pentaenedial. Its function is as follows. Broad specificity mitochondrial dioxygenase that mediates the asymmetric oxidative cleavage of carotenoids. Cleaves carotenes (pure hydrocarbon carotenoids) such as all-trans-beta-carotene and lycopene as well as xanthophylls (oxygenated carotenoids) such as zeaxanthin, lutein and beta-cryptoxanthin at both the 9,10 and the 9',10' carbon-carbon double bond. Through its function in carotenoids metabolism regulates oxidative stress and the production of important signaling molecules. This is Carotenoid-cleaving dioxygenase, mitochondrial from Macaca fascicularis (Crab-eating macaque).